The chain runs to 320 residues: Probable cell division protein WhiA (320 aa).

Positions 276–310 (TLKELGEMVAGGKISKSGINHRLRKIDEIAERLRA) form a DNA-binding region, H-T-H motif.

It belongs to the WhiA family.

Its function is as follows. Involved in cell division and chromosome segregation. The sequence is that of Probable cell division protein WhiA from Geobacillus thermodenitrificans (strain NG80-2).